We begin with the raw amino-acid sequence, 306 residues long: Aspartate carbamoyltransferase catalytic subunit (306 aa).

Positions 56 and 57 each coordinate carbamoyl phosphate. Lys84 is an L-aspartate binding site. Carbamoyl phosphate-binding residues include Arg106, His136, and Gln139. Arg169 and Arg221 together coordinate L-aspartate. Carbamoyl phosphate-binding residues include Ala262 and Pro263.

It belongs to the aspartate/ornithine carbamoyltransferase superfamily. ATCase family. As to quaternary structure, heterododecamer (2C3:3R2) of six catalytic PyrB chains organized as two trimers (C3), and six regulatory PyrI chains organized as three dimers (R2).

It carries out the reaction carbamoyl phosphate + L-aspartate = N-carbamoyl-L-aspartate + phosphate + H(+). Its pathway is pyrimidine metabolism; UMP biosynthesis via de novo pathway; (S)-dihydroorotate from bicarbonate: step 2/3. Functionally, catalyzes the condensation of carbamoyl phosphate and aspartate to form carbamoyl aspartate and inorganic phosphate, the committed step in the de novo pyrimidine nucleotide biosynthesis pathway. This Streptococcus gordonii (strain Challis / ATCC 35105 / BCRC 15272 / CH1 / DL1 / V288) protein is Aspartate carbamoyltransferase catalytic subunit.